The sequence spans 434 residues: UDP-glucose 6-dehydrogenase (434 aa).

NAD(+) contacts are provided by residues 2-19 (NITF…GIIM), valine 11, aspartate 30, lysine 35, threonine 121, and glutamate 152. Residues 148-152 (EFLRE), lysine 204, asparagine 208, 249-253 (FLNAG), and glycine 257 each bind substrate. The active-site Nucleophile is cysteine 260. Lysine 263 contacts NAD(+). Lysine 321 provides a ligand contact to substrate. Position 328 (arginine 328) interacts with NAD(+).

It belongs to the UDP-glucose/GDP-mannose dehydrogenase family.

The enzyme catalyses UDP-alpha-D-glucose + 2 NAD(+) + H2O = UDP-alpha-D-glucuronate + 2 NADH + 3 H(+). Its pathway is nucleotide-sugar biosynthesis; UDP-alpha-D-glucuronate biosynthesis; UDP-alpha-D-glucuronate from UDP-alpha-D-glucose: step 1/1. The sequence is that of UDP-glucose 6-dehydrogenase (udg) from Rickettsia typhi (strain ATCC VR-144 / Wilmington).